The sequence spans 279 residues: tRNA (guanine-N(1)-)-methyltransferase (279 aa).

S-adenosyl-L-methionine contacts are provided by residues G132 and 152–157; that span reads IGDYVL.

Belongs to the RNA methyltransferase TrmD family. Homodimer.

It is found in the cytoplasm. It carries out the reaction guanosine(37) in tRNA + S-adenosyl-L-methionine = N(1)-methylguanosine(37) in tRNA + S-adenosyl-L-homocysteine + H(+). Its function is as follows. Specifically methylates guanosine-37 in various tRNAs. In Saccharophagus degradans (strain 2-40 / ATCC 43961 / DSM 17024), this protein is tRNA (guanine-N(1)-)-methyltransferase.